A 150-amino-acid polypeptide reads, in one-letter code: D-aminoacyl-tRNA deacylase (150 aa).

A Gly-cisPro motif, important for rejection of L-amino acids motif is present at residues 138–139; the sequence is GP.

This sequence belongs to the DTD family. In terms of assembly, homodimer.

The protein resides in the cytoplasm. It catalyses the reaction glycyl-tRNA(Ala) + H2O = tRNA(Ala) + glycine + H(+). The enzyme catalyses a D-aminoacyl-tRNA + H2O = a tRNA + a D-alpha-amino acid + H(+). Its function is as follows. An aminoacyl-tRNA editing enzyme that deacylates mischarged D-aminoacyl-tRNAs. Also deacylates mischarged glycyl-tRNA(Ala), protecting cells against glycine mischarging by AlaRS. Acts via tRNA-based rather than protein-based catalysis; rejects L-amino acids rather than detecting D-amino acids in the active site. By recycling D-aminoacyl-tRNA to D-amino acids and free tRNA molecules, this enzyme counteracts the toxicity associated with the formation of D-aminoacyl-tRNA entities in vivo and helps enforce protein L-homochirality. This is D-aminoacyl-tRNA deacylase from Thermosipho melanesiensis (strain DSM 12029 / CIP 104789 / BI429).